We begin with the raw amino-acid sequence, 81 residues long: MAHSVKIYATCIGCTQCVRACPTDVLEMVPWDGCKANQIASAPRTEDCVGCKRCESACPTDFLSVRVYLGNESTRSMGLAY.

4Fe-4S ferredoxin-type domains lie at 2-31 (AHSVKIYATCIGCTQCVRACPTDVLEMVPW) and 39-68 (IASAPRTEDCVGCKRCESACPTDFLSVRVY). [4Fe-4S] cluster contacts are provided by Cys-11, Cys-14, Cys-17, Cys-21, Cys-48, Cys-51, Cys-54, and Cys-58.

The eukaryotic PSI reaction center is composed of at least 11 subunits. [4Fe-4S] cluster serves as cofactor.

It is found in the plastid. Its subcellular location is the chloroplast thylakoid membrane. It catalyses the reaction reduced [plastocyanin] + hnu + oxidized [2Fe-2S]-[ferredoxin] = oxidized [plastocyanin] + reduced [2Fe-2S]-[ferredoxin]. Functionally, apoprotein for the two 4Fe-4S centers FA and FB of photosystem I (PSI); essential for photochemical activity. FB is the terminal electron acceptor of PSI, donating electrons to ferredoxin. The C-terminus interacts with PsaA/B/D and helps assemble the protein into the PSI complex. Required for binding of PsaD and PsaE to PSI. PSI is a plastocyanin-ferredoxin oxidoreductase, converting photonic excitation into a charge separation, which transfers an electron from the donor P700 chlorophyll pair to the spectroscopically characterized acceptors A0, A1, FX, FA and FB in turn. This chain is Photosystem I iron-sulfur center, found in Mesostigma viride (Green alga).